Reading from the N-terminus, the 222-residue chain is Glutathione-specific gamma-glutamylcyclotransferase 1 (222 aa).

The disordered stretch occupies residues 1 to 25; sequence MKQESAAQSTPPPSLSPAPSAQPSW. 35–40 contributes to the substrate binding site; sequence IFGYGS. Residue glutamate 115 is the Proton acceptor of the active site.

Belongs to the gamma-glutamylcyclotransferase family. ChaC subfamily. In terms of assembly, interacts with NOTCH1 (via extracellular region).

Its subcellular location is the cytoplasm. It is found in the cytosol. The protein resides in the golgi apparatus. It localises to the trans-Golgi network. The enzyme catalyses glutathione = L-cysteinylglycine + 5-oxo-L-proline. Its function is as follows. Catalyzes the cleavage of glutathione into 5-oxo-L-proline and a Cys-Gly dipeptide. Acts specifically on glutathione, but not on other gamma-glutamyl peptides. Glutathione depletion is an important factor for apoptosis initiation and execution. Acts as a pro-apoptotic component of the unfolded protein response pathway by mediating the pro-apoptotic effects of the ATF4-ATF3-DDIT3/CHOP cascade. Negative regulator of Notch signaling pathway involved in embryonic neurogenesis: acts by inhibiting Notch cleavage by furin, maintaining Notch in an immature inactive form, thereby promoting neurogenesis in embryos. The chain is Glutathione-specific gamma-glutamylcyclotransferase 1 from Rattus norvegicus (Rat).